A 330-amino-acid chain; its full sequence is Cyclin N-terminal domain-containing protein 1 (330 aa).

Residues 27–178 (DALLHLAQQN…VLKSLNFRIN (152 aa)) enclose the Cyclin N-terminal domain.

Interacts with PRR19; this interaction promotes crossover formation. Interacts with RFC3 and RFC4; these interactions facilitate crossover formation. Interacts with CDC34; this interaction regulates the cell-cycle progression.

It localises to the nucleus. Its subcellular location is the cytoplasm. It is found in the chromosome. Its function is as follows. Plays a role in the different steps of crossover formation during meiotic recombination. Participates in the crossover differentiation step of crossover-specific recombination intermediates through its interaction with PRR19. In addition, stimulates crossover formation through the interactions with RFC3 and RFC4 and simultaneously regulates cell-cycle progression through interactions with CDC34 and subsequent ubiquitination of WEE1. May also participates in an active deselection process that destabilizes or removes excess pre-CO intermediates. This chain is Cyclin N-terminal domain-containing protein 1, found in Homo sapiens (Human).